The following is a 399-amino-acid chain: Nicotinate phosphoribosyltransferase (399 aa).

A Phosphohistidine; by autocatalysis modification is found at His-224.

It belongs to the NAPRTase family. Post-translationally, transiently phosphorylated on a His residue during the reaction cycle. Phosphorylation strongly increases the affinity for substrates and increases the rate of nicotinate D-ribonucleotide production. Dephosphorylation regenerates the low-affinity form of the enzyme, leading to product release.

The catalysed reaction is nicotinate + 5-phospho-alpha-D-ribose 1-diphosphate + ATP + H2O = nicotinate beta-D-ribonucleotide + ADP + phosphate + diphosphate. It functions in the pathway cofactor biosynthesis; NAD(+) biosynthesis; nicotinate D-ribonucleotide from nicotinate: step 1/1. Functionally, catalyzes the synthesis of beta-nicotinate D-ribonucleotide from nicotinate and 5-phospho-D-ribose 1-phosphate at the expense of ATP. In Ectopseudomonas mendocina (strain ymp) (Pseudomonas mendocina), this protein is Nicotinate phosphoribosyltransferase.